The sequence spans 243 residues: Vesicle-associated membrane protein-associated protein B (243 aa).

A2 is subject to N-acetylalanine. The Cytoplasmic segment spans residues 2 to 218 (AKVEQVLSLE…PASAMAGKEE (217 aa)). One can recognise an MSP domain in the interval 7-124 (VLSLEPQHEL…MDSKLRCVFE (118 aa)). At S146 the chain carries Phosphoserine. K147 participates in a covalent cross-link: Glycyl lysine isopeptide (Lys-Gly) (interchain with G-Cter in SUMO1). T150 carries the phosphothreonine modification. 3 positions are modified to phosphoserine: S158, S159, and S160. A coiled-coil region spans residues 161 to 196 (LDDTEVKKVMEECKRLQSEVQRLREENKQFKEEDGL). Basic and acidic residues predominate over residues 186 to 197 (ENKQFKEEDGLR). Residues 186–214 (ENKQFKEEDGLRMRKTAQSNSPAPASAMA) are disordered. S206 carries the phosphoserine modification. Residues 219 to 239 (GLSTRLLALVVLFFIVGVIIG) form a helical; Anchor for type IV membrane protein membrane-spanning segment.

Belongs to the VAMP-associated protein (VAP) (TC 9.B.17) family. As to quaternary structure, homodimer, and heterodimer with VAPA. Interacts with VAMP1 and VAMP2. Interacts (via MSP domain) with ZFYVE27. Interacts with RMDN3. Interacts with KIF5A in a ZFYVE27-dependent manner. Interacts (via MSP domain) with STARD3 (via phospho-FFAT motif). Interacts with STARD3NL (via FFAT motif). Interacts with CERT1. Interacts with PLEKHA3 and SACM1L to form a ternary complex. Interacts with VPS13A (via FFAT motif). Interacts with RB1CC1 (via phosphorylated FFAT motif), MIGA2 (via phosphorylated FFAT motif), RMDN3 (via phosphorylated FFAT motif), OSBPL1A (via FFAT motif), KCNB1 (via phosphorylated FFAT motif) and KCNB2 (via phosphorylated FFAT motif). Interacts (via MSP domain) with WDR44 (via FFAT motif); the interactions connect the endoplasmic reticulum (ER) with the endosomal tubule.

It is found in the endoplasmic reticulum membrane. Its function is as follows. Endoplasmic reticulum (ER)-anchored protein that mediates the formation of contact sites between the ER and endosomes via interaction with FFAT motif-containing proteins such as STARD3 or WDR44. Interacts with STARD3 in a FFAT motif phosphorylation dependent manner. Via interaction with WDR44 participates in neosynthesized protein export. Participates in the endoplasmic reticulum unfolded protein response (UPR) by inducing ERN1/IRE1 activity. Involved in cellular calcium homeostasis regulation. The sequence is that of Vesicle-associated membrane protein-associated protein B from Bos taurus (Bovine).